Consider the following 191-residue polypeptide: UPF0669 protein C6orf120 (191 aa).

Positions 1–30 are cleaved as a signal peptide; sequence MAAPRGRAAPWTTALLLLLASQVLSPGSCA. N-linked (GlcNAc...) asparagine glycosylation occurs at Asn-53.

It belongs to the UPF0669 family. In terms of tissue distribution, mainly expressed in hepatocytes and some weak expression in germinal center cells of lymph nodes.

The protein localises to the secreted. Its function is as follows. May be involved in induction of apoptosis in CD4(+) T-cells, but not CD8(+) T-cells or hepatocytes. The sequence is that of UPF0669 protein C6orf120 (C6orf120) from Homo sapiens (Human).